The chain runs to 367 residues: Endophilin-A2 (367 aa).

The tract at residues 1 to 21 (MSVAGLKKQFYKASQLVSEKV) is membrane-binding amphipathic helix. The BAR domain occupies 18 to 249 (SEKVGGAEGT…LKRRMREASS (232 aa)). The required for dimerization upon membrane association stretch occupies residues 60 to 87 (PNPASRAKLTMLNTMSKIRGQVKNPGYP). Residues 181–250 (EELRQAMEKF…KRRMREASSR (70 aa)) are a coiled coil. The segment at 218-254 (LVDAQLDYHRQAVQILDELAEKLKRRMREASSRPRRE) is interaction with ARC. Positions 243 to 293 (RMREASSRPRREYKPKPRETYDFGESDQSNGGFSCTPTPKVSASSSFRSDK) are disordered. Over residues 245 to 263 (REASSRPRREYKPKPRETY) the composition is skewed to basic and acidic residues. The segment covering 268–289 (SDQSNGGFSCTPTPKVSASSSF) has biased composition (polar residues). Positions 305–364 (LDQPCCKALYDFEPENDGELGFKEGDIITLTNQIDENWYEGMINGQSGFFPLNYVEVLVP) constitute an SH3 domain.

The protein belongs to the endophilin family. In terms of assembly, interacts with ARC. Interacts with SYNJ1 and DNM1. In terms of tissue distribution, highest level in central region of the theca of developing follicles (at protein level). Expressed at highest level in brain and testis, at high level in kidney, lung and stroma, low level in spleen and adrenal gland (at protein level). Expressed in most tissue with highest levels in small ovarian follicles, brain and testis.

It is found in the cytoplasm. It localises to the early endosome membrane. The protein resides in the cell projection. Its subcellular location is the podosome. Implicated in endocytosis. May recruit other proteins to membranes with high curvature. This is Endophilin-A2 from Gallus gallus (Chicken).